The following is a 328-amino-acid chain: Naphthalene 1,2-dioxygenase/salicylate 5-hydroxylase systems, ferredoxin--NAD(P)(+), reductase component (328 aa).

Residues 1-89 enclose the 2Fe-2S ferredoxin-type domain; it reads MELVVEPLNL…DCTIEIPESD (89 aa). C35, C40, C43, and C73 together coordinate [2Fe-2S] cluster. The region spanning 96 to 193 is the FAD-binding FR-type domain; sequence ARIVKGTVTA…SGPLGTAYLR (98 aa).

The protein belongs to the bacterial ring-hydroxylating dioxygenase ferredoxin reductase family. As to quaternary structure, ferredoxin reductase NagAa belongs to both the salicylate 5-hydroxylase (S5H) and the naphthalene 1,2-dioxygenase (NDO) multicomponent enzyme systems. The NDO multicomponent enzyme system is composed of an electron transfer component and a dioxygenase component (iron sulfur protein (ISP)). The electron transfer component is composed of a ferredoxin reductase (NagAa) and a ferredoxin (NagAb), and the dioxygenase component is formed by a large alpha subunit (NagAc) and a small beta subunit (NagAd). The S5H multicomponent enzyme system is composed of an electron transfer component and a monooxygenase component. The electron transfer component is comprised of a ferredoxin reductase (NagAa) and a ferredoxin (NagAb), and the monooxygenase component is formed by a large subunit (NagG) and a small subunit (NagH). [2Fe-2S] cluster serves as cofactor. It depends on FAD as a cofactor.

The enzyme catalyses 2 reduced [2Fe-2S]-[ferredoxin] + NAD(+) + H(+) = 2 oxidized [2Fe-2S]-[ferredoxin] + NADH. It carries out the reaction 2 reduced [2Fe-2S]-[ferredoxin] + NADP(+) + H(+) = 2 oxidized [2Fe-2S]-[ferredoxin] + NADPH. Its pathway is aromatic compound metabolism; naphthalene degradation. Functionally, component of two multicomponent enzyme systems which are involved in the catabolism of naphthalene. Plays a role as an electron transfer component for both salicylate 5-hydroxylase (S5H) and naphthalene 1,2-dioxygenase (NDO) systems, by transferring electrons from NAD(P)H to the oxygenase component via the ferredoxin NagAb. The electron transport chain from the two systems can use both NADH and NADPH as electron donors at approximately similar rates. The chain is Naphthalene 1,2-dioxygenase/salicylate 5-hydroxylase systems, ferredoxin--NAD(P)(+), reductase component from Ralstonia sp.